Consider the following 583-residue polypeptide: COP9 signalosome complex subunit 10 (583 aa).

The span at 1-35 (MSDEEDYAEYMMSEEDMSSFEMDVDSDVEPDDAGL) shows a compositional bias: acidic residues. Residues 1–55 (MSDEEDYAEYMMSEEDMSSFEMDVDSDVEPDDAGLEQDQQVTGDDYDGSAGNSGD) are disordered. The PCI domain maps to 297-485 (DHYNQSQMLS…DYVYFGEEYF (189 aa)).

In terms of assembly, component of a COP9 signalosome-like (CSN) complex.

The protein resides in the cytoplasm. Its subcellular location is the nucleus. In terms of biological role, component of the COP9 signalosome (CSN) complex that acts as an regulator of the ubiquitin (Ubl) conjugation pathway by mediating the deneddylation of the cullin subunit of SCF-type E3 ubiquitin-protein ligase complexes. The CSN complex is involved in the regulation of the mating pheromone response. This Kluyveromyces lactis (strain ATCC 8585 / CBS 2359 / DSM 70799 / NBRC 1267 / NRRL Y-1140 / WM37) (Yeast) protein is COP9 signalosome complex subunit 10 (RRI2).